Reading from the N-terminus, the 295-residue chain is Phosphatidylserine decarboxylase proenzyme (295 aa).

Residues Asp113, His169, and Ser256 each act as charge relay system; for autoendoproteolytic cleavage activity in the active site. Ser256 serves as the catalytic Schiff-base intermediate with substrate; via pyruvic acid; for decarboxylase activity. At Ser256 the chain carries Pyruvic acid (Ser); by autocatalysis.

This sequence belongs to the phosphatidylserine decarboxylase family. PSD-B subfamily. Prokaryotic type II sub-subfamily. Heterodimer of a large membrane-associated beta subunit and a small pyruvoyl-containing alpha subunit. Pyruvate is required as a cofactor. In terms of processing, is synthesized initially as an inactive proenzyme. Formation of the active enzyme involves a self-maturation process in which the active site pyruvoyl group is generated from an internal serine residue via an autocatalytic post-translational modification. Two non-identical subunits are generated from the proenzyme in this reaction, and the pyruvate is formed at the N-terminus of the alpha chain, which is derived from the carboxyl end of the proenzyme. The autoendoproteolytic cleavage occurs by a canonical serine protease mechanism, in which the side chain hydroxyl group of the serine supplies its oxygen atom to form the C-terminus of the beta chain, while the remainder of the serine residue undergoes an oxidative deamination to produce ammonia and the pyruvoyl prosthetic group on the alpha chain. During this reaction, the Ser that is part of the protease active site of the proenzyme becomes the pyruvoyl prosthetic group, which constitutes an essential element of the active site of the mature decarboxylase.

It localises to the cell membrane. The catalysed reaction is a 1,2-diacyl-sn-glycero-3-phospho-L-serine + H(+) = a 1,2-diacyl-sn-glycero-3-phosphoethanolamine + CO2. Its pathway is phospholipid metabolism; phosphatidylethanolamine biosynthesis; phosphatidylethanolamine from CDP-diacylglycerol: step 2/2. In terms of biological role, catalyzes the formation of phosphatidylethanolamine (PtdEtn) from phosphatidylserine (PtdSer). The protein is Phosphatidylserine decarboxylase proenzyme of Clostridium botulinum (strain Langeland / NCTC 10281 / Type F).